Reading from the N-terminus, the 499-residue chain is Maturase K (499 aa).

Belongs to the intron maturase 2 family. MatK subfamily.

The protein resides in the plastid. It localises to the chloroplast. In terms of biological role, usually encoded in the trnK tRNA gene intron. Probably assists in splicing its own and other chloroplast group II introns. This chain is Maturase K, found in Gleditsia triacanthos (Common honey-locust).